A 330-amino-acid chain; its full sequence is Aspartate--ammonia ligase (330 aa).

It belongs to the class-II aminoacyl-tRNA synthetase family. AsnA subfamily.

Its subcellular location is the cytoplasm. The catalysed reaction is L-aspartate + NH4(+) + ATP = L-asparagine + AMP + diphosphate + H(+). The protein operates within amino-acid biosynthesis; L-asparagine biosynthesis; L-asparagine from L-aspartate (ammonia route): step 1/1. This Escherichia coli (strain SMS-3-5 / SECEC) protein is Aspartate--ammonia ligase.